Reading from the N-terminus, the 285-residue chain is Probable endonuclease 4 (285 aa).

Residues His-69, His-109, Glu-145, Asp-179, His-182, His-216, Asp-229, His-231, and Glu-261 each coordinate Zn(2+).

This sequence belongs to the AP endonuclease 2 family. The cofactor is Zn(2+).

The enzyme catalyses Endonucleolytic cleavage to 5'-phosphooligonucleotide end-products.. In terms of biological role, endonuclease IV plays a role in DNA repair. It cleaves phosphodiester bonds at apurinic or apyrimidinic (AP) sites, generating a 3'-hydroxyl group and a 5'-terminal sugar phosphate. The chain is Probable endonuclease 4 from Salmonella schwarzengrund (strain CVM19633).